The chain runs to 278 residues: MKLCGFEAGLDQPFFLIAGPCTAESEQLCLDVAGHMKEVCARLGINYIFKASYDKANRSSGKSVRGLGLEEGLRIFSEVQRQIGVPVLTDVHTIEDIPAVAAVVDVLQTPAFLCRQTDFIHAVATCGKPVNIKKGQFLAPGDMKNVVDKAREVNNGADNIMVCERGASFGYNNLVSDMRSLAIMRETGCPVVFDATHSVQLPGGQGTTSGGQREFVPVLARAAIAVGISGLFMETHPCPEKAWSDGPNSWPLDRMESLLATLVALDKAVKTAGFEELK.

This sequence belongs to the KdsA family.

The protein resides in the cytoplasm. It catalyses the reaction D-arabinose 5-phosphate + phosphoenolpyruvate + H2O = 3-deoxy-alpha-D-manno-2-octulosonate-8-phosphate + phosphate. The protein operates within carbohydrate biosynthesis; 3-deoxy-D-manno-octulosonate biosynthesis; 3-deoxy-D-manno-octulosonate from D-ribulose 5-phosphate: step 2/3. It participates in bacterial outer membrane biogenesis; lipopolysaccharide biosynthesis. The sequence is that of 2-dehydro-3-deoxyphosphooctonate aldolase from Dechloromonas aromatica (strain RCB).